Reading from the N-terminus, the 191-residue chain is Calcium and integrin-binding protein 1 (191 aa).

A lipid anchor (N-myristoyl glycine) is attached at Gly-2. EF-hand domains lie at 103 to 138 (TPDI…LTGE) and 148 to 183 (EMKQ…SPDF). The Ca(2+) site is built by Asp-116, Asp-118, Asp-120, Thr-122, Asp-127, Asp-161, Asp-163, Asp-165, Thr-167, and Glu-172. The residue at position 118 (Asp-118) is a Phosphoserine.

Monomer. Interacts with MYO1C. Interacts (via C-terminal region) with PPP3R1 and CACNA1C; the interactions increase upon cardiomyocytes hypertrophy. Interacts with the heterodimeric integrin alpha-IIb/beta3 (ITGA2B-ITGB3). Interacts with ITGA2B (via cytoplasmic domain); the interaction is direct and calcium-dependent. Interacts with the protein kinases PLK2/SNK and PRKDC (via the region immediately upstream of the kinase domain). Interacts with PLK3; the interaction inhibits PLK3 kinase activity. Interacts with PSEN2. Interacts (via C-terminus) with F8. Interacts with NBR1 (via C-terminus). Interacts with FEZ1 (via C-terminus). Interacts with UBR5 (via C-terminus); the interaction is sensitive to DNA damage, and may target CIB1 for ubiquitin-mediated degradation. Interacts with IFI6; the interaction is direct. Interacts with BCL2. Interacts with ITPR3; the interaction occurs in a calcium-dependent manner. Interacts with PTK2/FAK1. Interacts with MAP3K5; the interaction inhibits MAP3K5 activation by phosphorylation, and its subsequent interaction with TRAF2. Isoform 2 interacts with PRKD2 (via N-terminal AP-rich region), PTK2/FAK1 and PAK1. Interacts with TAS1R2 (via C-terminus); the interaction is independent of the myristoylation state of CIB1. Interacts (via C-terminal region) with STMN2 (via the N-terminal region); the interaction is direct, occurs in a calcium-dependent manner and attenuates the STMN2-induced neurite outgrowth inhibition. Interacts with SPHK1, the interaction occurs in a calcium-dependent manner. Interacts with ITGA2B (via C-terminal cytoplasmic tail); the interaction occurs upon platelet aggregation and is stabilized/increased in a calcium and magnesium-dependent manner. Interacts with PAK1 (via N-terminal region); the interaction is direct and occurs in a calcium-dependent manner. Interacts with RAC3 (via C-terminal region); the interaction induces their association with the cytoskeleton upon alpha-IIb/beta3 integrin-mediated adhesion. Interacts with ITGA5 and ITGAV. Interacts and forms a complex with TMC6 and TMC8; the interaction stabilizes each component of the complex. In terms of assembly, (Microbial infection) Interacts with human papillomavirus 4/HPV4 protein E8, human papillomavirus 5/HPV5 protein E1, and human papillomavirus 16/HPV16 proteins E2 and E5. In terms of processing, phosphorylation of isoform 2 at Ser-118 by PRKD2 increases its ability to stimulate tumor angiogenesis. As to expression, ubiquitously expressed. Expressed in the epidermis, hair follicles and keratinocytes. Detected in platelets and in cell lines of megakaryocytic and erythrocytic lineages. Both isoform 1 and isoform 2 are detected in various cancer cell lines, with isoform 2 being the predominant form (at protein level).

It localises to the membrane. The protein resides in the cell membrane. It is found in the sarcolemma. The protein localises to the apical cell membrane. Its subcellular location is the cell projection. It localises to the ruffle membrane. The protein resides in the filopodium tip. It is found in the growth cone. The protein localises to the lamellipodium. Its subcellular location is the cytoplasm. It localises to the cytoskeleton. The protein resides in the microtubule organizing center. It is found in the centrosome. The protein localises to the perinuclear region. Its subcellular location is the nucleus. It localises to the neuron projection. The protein resides in the perikaryon. It is found in the golgi apparatus. The protein localises to the trans-Golgi network. Its function is as follows. Calcium-binding protein that plays a role in the regulation of numerous cellular processes, such as cell differentiation, cell division, cell proliferation, cell migration, thrombosis, angiogenesis, cardiac hypertrophy and apoptosis. Involved in bone marrow megakaryocyte differentiation by negatively regulating thrombopoietin-mediated signaling pathway. Participates in the endomitotic cell cycle of megakaryocyte, a form of mitosis in which both karyokinesis and cytokinesis are interrupted. Plays a role in integrin signaling by negatively regulating alpha-IIb/beta3 activation in thrombin-stimulated megakaryocytes preventing platelet aggregation. Up-regulates PTK2/FAK1 activity, and is also needed for the recruitment of PTK2/FAK1 to focal adhesions; it thus appears to play an important role in focal adhesion formation. Positively regulates cell migration on fibronectin in a CDC42-dependent manner, the effect being negatively regulated by PAK1. Functions as a negative regulator of stress activated MAP kinase (MAPK) signaling pathways. Down-regulates inositol 1,4,5-trisphosphate receptor-dependent calcium signaling. Involved in sphingosine kinase SPHK1 translocation to the plasma membrane in a N-myristoylation-dependent manner preventing TNF-alpha-induced apoptosis. Regulates serine/threonine-protein kinase PLK3 activity for proper completion of cell division progression. Plays a role in microtubule (MT) dynamics during neuronal development; disrupts the MT depolymerization activity of STMN2 attenuating NGF-induced neurite outgrowth and the MT reorganization at the edge of lamellipodia. Promotes cardiomyocyte hypertrophy via activation of the calcineurin/NFAT signaling pathway. Stimulates calcineurin PPP3R1 activity by mediating its anchoring to the sarcolemma. In ischemia-induced (pathological or adaptive) angiogenesis, stimulates endothelial cell proliferation, migration and microvessel formation by activating the PAK1 and ERK1/ERK2 signaling pathway. Also promotes cancer cell survival and proliferation. May regulate cell cycle and differentiation of spermatogenic germ cells, and/or differentiation of supporting Sertoli cells. Forms a complex with TMC6/EVER1 and TMC8/EVER2 in lymphocytes and keratynocytes where CIB1 stabilizes TMC6 and TMC8 levels and reciprocally. Acts as a restriction factor that promotes keratinocyte-intrinsic immunity to human beta-papillomaviruses (HPVs). In terms of biological role, plays a regulatory role in angiogenesis and tumor growth by mediating PKD/PRKD2-induced vascular endothelial growth factor A (VEGFA) secretion. The sequence is that of Calcium and integrin-binding protein 1 (CIB1) from Homo sapiens (Human).